A 100-amino-acid polypeptide reads, in one-letter code: Carboxysome shell vertex protein CcmL (100 aa).

Residues 1–83 form the BMV domain; the sequence is MQIGRVRGTV…VDAVVIGIID (83 aa).

Belongs to the CcmL/EutN family. CcmL subfamily. In terms of assembly, homopentamer. Interacts with full-length CcmM.

It is found in the carboxysome. In terms of biological role, probably forms vertices in the carboxysome, a polyhedral inclusion where RuBisCO (ribulose bisphosphate carboxylase, rbcL-rbcS) is sequestered. Has been modeled to induce curvature upon insertion into an otherwise flat hexagonal molecular layer of CcmK subunits. In Gloeobacter violaceus (strain ATCC 29082 / PCC 7421), this protein is Carboxysome shell vertex protein CcmL.